The primary structure comprises 463 residues: NADH dehydrogenase [ubiquinone] iron-sulfur protein 2, mitochondrial (463 aa).

A mitochondrion-targeting transit peptide spans 1 to 33 (MAALRVLCGLRGVAAQVLRPGAGVRLPIQPSRG). At lysine 62 the chain carries N6-acetyllysine. Arginine 118 carries the symmetric dimethylarginine modification. Residues cysteine 326, cysteine 332, and cysteine 347 each contribute to the [4Fe-4S] cluster site.

Belongs to the complex I 49 kDa subunit family. In terms of assembly, core subunit of respiratory chain NADH dehydrogenase (Complex I) which is composed of 45 different subunits. Component of the iron-sulfur (IP) fragment of the enzyme. Interacts with NDUFAF3. Interacts with NDUFAF7. Interacts with CERS2. [4Fe-4S] cluster is required as a cofactor. Post-translationally, dimethylation at Arg-118 by NDUFAF7 takes place after NDUFS2 assembles into the complex I, leading to stabilize the early intermediate complex.

The protein resides in the mitochondrion inner membrane. The catalysed reaction is a ubiquinone + NADH + 5 H(+)(in) = a ubiquinol + NAD(+) + 4 H(+)(out). In terms of biological role, core subunit of the mitochondrial membrane respiratory chain NADH dehydrogenase (Complex I) which catalyzes electron transfer from NADH through the respiratory chain, using ubiquinone as an electron acceptor. Essential for the catalytic activity and assembly of complex I. Redox-sensitive, critical component of the oxygen-sensing pathway in the pulmonary vasculature which plays a key role in acute pulmonary oxygen-sensing and hypoxic pulmonary vasoconstriction. Plays an important role in carotid body sensing of hypoxia. Essential for glia-like neural stem and progenitor cell proliferation, differentiation and subsequent oligodendrocyte or neuronal maturation. The sequence is that of NADH dehydrogenase [ubiquinone] iron-sulfur protein 2, mitochondrial (NDUFS2) from Gorilla gorilla gorilla (Western lowland gorilla).